The following is a 254-amino-acid chain: Protein orai-2 (254 aa).

4 helical membrane passes run 66 to 83, 94 to 114, 148 to 168, and 196 to 216; these read TSAL…EVQL, LIAF…ALLI, LAWG…VVLL, and AALV…VFTI.

This sequence belongs to the Orai family. Oligomerizes in homomeric and heteromeric ORAI complexes. Native CRAC channels most likely consist of hexameric ORAI heteromers, implying that diverse ORAI1, ORAI2 and ORAI3 subunit combinations with distinct biophysical properties can operate in a cell-type specific way. Interacts with STIM1; this regulates channel activity. Interacts with CRACR2A/EFCAB4B.

The protein localises to the cell membrane. It catalyses the reaction Ca(2+)(in) = Ca(2+)(out). Its activity is regulated as follows. CRAC channels are regulated by fast Ca(2+)-dependent inactivation (FCDI), a mechanism that limits Ca(2+) influx and cell toxicity. ORAI2 channels display prominent FCDI. Inhibited by lanthanides such as Gd(3+) ions. In terms of biological role, pore-forming subunit of inward rectifying Ca(2+) release-activated Ca(2+) (CRAC) channels. Assembles with ORAI1 and ORAI3 to form hexameric CRAC channels that mediate Ca(2+) influx upon depletion of endoplasmic reticulum Ca(2+) store and channel activation by Ca(2+) sensor STIM1, a process known as store-operated Ca(2+) entry (SOCE). Various pore subunit combinations may account for distinct CRAC channel spatiotemporal and cell-type specific dynamics. ORAI1 mainly contributes to the generation of Ca(2+) plateaus involved in sustained Ca(2+) entry and is dispensable for cytosolic Ca(2+) oscillations, whereas ORAI2 and ORAI3 generate oscillatory patterns. CRAC channels assemble in Ca(2+) signaling microdomains where Ca(2+) influx is coupled to calmodulin and calcineurin signaling and activation of NFAT transcription factors recruited to ORAI1 via AKAP5. CRAC channels are the main pathway for Ca(2+) influx in T cells and promote the immune response to pathogens by activating NFAT-dependent cytokine and chemokine transcription. The chain is Protein orai-2 (ORAI2) from Homo sapiens (Human).